A 922-amino-acid polypeptide reads, in one-letter code: GPI inositol-deacylase (922 aa).

Residues 1–11 (MFLHSVNLWNL) are Cytoplasmic-facing. A helical transmembrane segment spans residues 12–32 (AFYVFMVFLATLGLWDVFFGF). The Lumenal segment spans residues 33–597 (EENKCSMSYM…GQVVRFHGGA (565 aa)). The active site involves S174. Residues N363, N402, and N558 are each glycosylated (N-linked (GlcNAc...) asparagine). The helical transmembrane segment at 598–618 (LPAYVVSSILLAYGGQLYSLL) threads the bilayer. The Cytoplasmic portion of the chain corresponds to 619-641 (STGFCLEYGTMLDKEAKPYKVDP). Residues 642–662 (FVIMIKFLLGYKWFKELWDAV) traverse the membrane as a helical segment. The Lumenal segment spans residues 663-668 (LLPELD). A helical transmembrane segment spans residues 669–689 (AIVLTSQSMCFPLVSLILFLF). Over 690-694 (GTCTA) the chain is Cytoplasmic. The helical transmembrane segment at 695–715 (YWSGLLSSASVQLLSSLWLAL) threads the bilayer. At 716–733 (KRPAELPKDVKVMSPDLP) the chain is on the lumenal side. The chain crosses the membrane as a helical span at residues 734 to 754 (VLTVVFLIISWTTCGALAILL). The Cytoplasmic portion of the chain corresponds to 755–816 (SYLYYVFKVV…NDAEDSLRMH (62 aa)). The tract at residues 776–801 (NQPVNPKHSRRSEKKSNHHKDSAIQN) is disordered. A compositionally biased stretch (basic residues) spans 782 to 793 (KHSRRSEKKSNH). A helical transmembrane segment spans residues 817-837 (STVINLLTWVVLLSMPSLIYW). Residues 838–853 (SKNLRYYFKLNPDPCK) are Lumenal-facing. The helical transmembrane segment at 854-874 (PLAFLLIPAIAVLGNTHTVSI) threads the bilayer. The Cytoplasmic portion of the chain corresponds to 875-894 (KSSKLLKTASQFPLPLAVGV). The helical transmembrane segment at 895–915 (IAFGSSHLYRVPCFVIIPLVF) threads the bilayer. Residues 916–922 (HSLCNFM) are Lumenal-facing.

This sequence belongs to the GPI inositol-deacylase family.

Its subcellular location is the endoplasmic reticulum membrane. Functionally, GPI inositol-deacylase that catalyzes the remove of the acyl chain linked to the 2-OH position of inositol ring from the GPI-anchored protein (GPI-AP) in the endoplasmic reticulum. Initiates the post-attachment remodeling phase of GPI-AP biogenesis and participates in endoplasmic reticulum (ER)-to-Golgi transport of GPI-anchored protein. The protein is GPI inositol-deacylase of Rattus norvegicus (Rat).